Here is a 286-residue protein sequence, read N- to C-terminus: Bifunctional protein FolD (286 aa).

NADP(+) is bound by residues 164–166 (GAS), Ile-189, and Ile-230.

This sequence belongs to the tetrahydrofolate dehydrogenase/cyclohydrolase family. As to quaternary structure, homodimer.

It catalyses the reaction (6R)-5,10-methylene-5,6,7,8-tetrahydrofolate + NADP(+) = (6R)-5,10-methenyltetrahydrofolate + NADPH. It carries out the reaction (6R)-5,10-methenyltetrahydrofolate + H2O = (6R)-10-formyltetrahydrofolate + H(+). It functions in the pathway one-carbon metabolism; tetrahydrofolate interconversion. Its function is as follows. Catalyzes the oxidation of 5,10-methylenetetrahydrofolate to 5,10-methenyltetrahydrofolate and then the hydrolysis of 5,10-methenyltetrahydrofolate to 10-formyltetrahydrofolate. The chain is Bifunctional protein FolD from Wolinella succinogenes (strain ATCC 29543 / DSM 1740 / CCUG 13145 / JCM 31913 / LMG 7466 / NCTC 11488 / FDC 602W) (Vibrio succinogenes).